A 342-amino-acid polypeptide reads, in one-letter code: Putative glycosyltransferases (342 aa).

A run of 2 helical transmembrane segments spans residues 227–247 (IFYL…YLII) and 262–282 (VIVS…LVGI).

Belongs to the glycosyltransferase 2 family.

It is found in the cell membrane. In terms of biological role, may play only a redundant role in maintaining cell wall viability and bacterial virulence. In Mycobacterium tuberculosis (strain CDC 1551 / Oshkosh), this protein is Putative glycosyltransferases (pimF).